The following is a 345-amino-acid chain: Phosphoribosylformylglycinamidine cyclo-ligase (345 aa).

Belongs to the AIR synthase family.

It is found in the cytoplasm. The enzyme catalyses 2-formamido-N(1)-(5-O-phospho-beta-D-ribosyl)acetamidine + ATP = 5-amino-1-(5-phospho-beta-D-ribosyl)imidazole + ADP + phosphate + H(+). Its pathway is purine metabolism; IMP biosynthesis via de novo pathway; 5-amino-1-(5-phospho-D-ribosyl)imidazole from N(2)-formyl-N(1)-(5-phospho-D-ribosyl)glycinamide: step 2/2. This is Phosphoribosylformylglycinamidine cyclo-ligase from Shewanella sp. (strain ANA-3).